The sequence spans 334 residues: Aspartate carbamoyltransferase catalytic subunit (334 aa).

Residues R71 and T72 each coordinate carbamoyl phosphate. L-aspartate is bound at residue K99. The carbamoyl phosphate site is built by R121, H151, and Q154. Residues R184 and R239 each contribute to the L-aspartate site. Carbamoyl phosphate is bound by residues G280 and P281.

It belongs to the aspartate/ornithine carbamoyltransferase superfamily. ATCase family. As to quaternary structure, heterododecamer (2C3:3R2) of six catalytic PyrB chains organized as two trimers (C3), and six regulatory PyrI chains organized as three dimers (R2).

It carries out the reaction carbamoyl phosphate + L-aspartate = N-carbamoyl-L-aspartate + phosphate + H(+). Its pathway is pyrimidine metabolism; UMP biosynthesis via de novo pathway; (S)-dihydroorotate from bicarbonate: step 2/3. In terms of biological role, catalyzes the condensation of carbamoyl phosphate and aspartate to form carbamoyl aspartate and inorganic phosphate, the committed step in the de novo pyrimidine nucleotide biosynthesis pathway. This Pseudomonas entomophila (strain L48) protein is Aspartate carbamoyltransferase catalytic subunit.